The chain runs to 290 residues: ATP synthase gamma chain (290 aa).

Belongs to the ATPase gamma chain family. F-type ATPases have 2 components, CF(1) - the catalytic core - and CF(0) - the membrane proton channel. CF(1) has five subunits: alpha(3), beta(3), gamma(1), delta(1), epsilon(1). CF(0) has three main subunits: a, b and c.

It is found in the cell inner membrane. Functionally, produces ATP from ADP in the presence of a proton gradient across the membrane. The gamma chain is believed to be important in regulating ATPase activity and the flow of protons through the CF(0) complex. This chain is ATP synthase gamma chain, found in Anaeromyxobacter sp. (strain K).